The primary structure comprises 126 residues: Glycine cleavage system H protein (126 aa).

In terms of domain architecture, Lipoyl-binding spans isoleucine 20–arginine 102. Lysine 61 bears the N6-lipoyllysine mark.

It belongs to the GcvH family. As to quaternary structure, the glycine cleavage system is composed of four proteins: P, T, L and H. (R)-lipoate is required as a cofactor.

The glycine cleavage system catalyzes the degradation of glycine. The H protein shuttles the methylamine group of glycine from the P protein to the T protein. This Rhodospirillum rubrum (strain ATCC 11170 / ATH 1.1.1 / DSM 467 / LMG 4362 / NCIMB 8255 / S1) protein is Glycine cleavage system H protein.